Here is a 275-residue protein sequence, read N- to C-terminus: Putative phosphoenolpyruvate synthase regulatory protein (275 aa).

157–164 (GVSRCGKT) is a binding site for ADP.

The protein belongs to the pyruvate, phosphate/water dikinase regulatory protein family. PSRP subfamily.

The enzyme catalyses [pyruvate, water dikinase] + ADP = [pyruvate, water dikinase]-phosphate + AMP + H(+). The catalysed reaction is [pyruvate, water dikinase]-phosphate + phosphate + H(+) = [pyruvate, water dikinase] + diphosphate. Its function is as follows. Bifunctional serine/threonine kinase and phosphorylase involved in the regulation of the phosphoenolpyruvate synthase (PEPS) by catalyzing its phosphorylation/dephosphorylation. This chain is Putative phosphoenolpyruvate synthase regulatory protein, found in Bordetella bronchiseptica (strain ATCC BAA-588 / NCTC 13252 / RB50) (Alcaligenes bronchisepticus).